The chain runs to 802 residues: MSYKVNSSYPDSIPPTEQPYMASQYKQDLQSNIAMATNSEQQRQQQQQQQQQQQQQQQWINQPTAENSDLKEKMNCKNTLNEYIFDFLTKSSLKNTAAAFAQDAHLDRDKGQNPIDGPKSKENNGNQNTFSKVVDTPQGFLYEWWQIFWDIFNTSSSRGGSEFAQQYYQLVLQEQRQEQIYRSLAVHAARLQHDAERRGEYSNEDIDPMHLAAMMLGNPMAPAVQMRNVNMNPIPIPMVGNPIVNNFSIPPYNNANPTTGATAVAPTAPPSGDFTNVGPTQNRSQNVTGWPVYNYPMQPTTENPVGNPCNNNTTNNTTNNKSPVNQPKSLKTMHSTDKPNNVPTSKSTRSRSATSKAKGKVKAGLVAKRRRKNNTATVSAGSTNAGSPNITTPGSTTSEPAMVGSRVNKTPRSDIATNFRNQAIIFGEEDIYSNSKSSPSLDGASPSALVSKQPTKVRKNTKKASTSAFPVESANKLGGNSVVTGKKRSPPNTRVSRRKSTPSVILNADATKDENNMLRTFSNTTAPNIHSAPPTKTANSLPFPGINLGSFNKPAVSSPLSSVTESCFDPESGKIAGKNGPKRAVNSKVSASSPLSIATPPSGDAQKQRSSKVPGNVVIKPPHGFSTTNLNITLKSSKIITSQNNTVSQELPNGGNILEAQVGNDSRSSKGNRNTLSTSEEKKPSSNNQGYDFDALKNPSSLLFPNQAYASNNRTPNENSNVTDETSASTNNGDNDNTLIQPSSNVGTTLGPQQTSTYENQNVHSQNLKFGNIGMVEDQGPDYDLNLLDTNENDFNFINWEG.

Composition is skewed to polar residues over residues 1–10 and 28–40; these read MSYKVNSSYP and DLQS…TNSE. Disordered stretches follow at residues 1–20, 28–71, 104–130, 258–409, 434–506, 566–625, and 647–757; these read MSYK…EQPY, DLQS…SDLK, AHLD…QNTF, TTGA…RVNK, NSKS…SVIL, SCFD…PHGF, and VSQE…QTST. The span at 41-58 shows a compositional bias: low complexity; it reads QQRQQQQQQQQQQQQQQQ. In terms of domain architecture, LisH spans 76–108; it reads CKNTLNEYIFDFLTKSSLKNTAAAFAQDAHLDR. Residues 273 to 288 show a composition bias toward polar residues; it reads DFTNVGPTQNRSQNVT. The span at 310 to 320 shows a compositional bias: low complexity; the sequence is NNNTTNNTTNN. A compositionally biased stretch (polar residues) spans 321–343; that stretch reads KSPVNQPKSLKTMHSTDKPNNVP. The span at 344-356 shows a compositional bias: low complexity; it reads TSKSTRSRSATSK. Positions 357–373 are enriched in basic residues; the sequence is AKGKVKAGLVAKRRRKN. A compositionally biased stretch (polar residues) spans 374–399; it reads NTATVSAGSTNAGSPNITTPGSTTSE. The segment covering 485–500 has biased composition (basic residues); sequence GKKRSPPNTRVSRRKS. Composition is skewed to polar residues over residues 587–596, 663–678, and 698–757; these read SKVSASSPLS, GNDS…TLST, and NPSS…QTST.

The protein belongs to the FLO8 family.

The protein localises to the nucleus. Its function is as follows. Required for diploid filamentous growth, haploid invasive growth and flocculation. Putative transcriptional activator of FLO1. The sequence is that of Transcriptional activator FLO8 (FLO8) from Saccharomyces cerevisiae (strain JAY291) (Baker's yeast).